A 682-amino-acid chain; its full sequence is ATP-dependent DNA helicase RecG (682 aa).

Residues 46-139 form a wedge domain region; the sequence is ELRDLEEVKH…LKNGPHQEDK (94 aa). The region spanning 271–432 is the Helicase ATP-binding domain; the sequence is DMSSPYRMNR…VFGEMDVSVI (162 aa). Residue 284-291 participates in ATP binding; sequence GDVGSGKT. The DEAH box signature appears at 385–388; sequence DEQH. The region spanning 451 to 611 is the Helicase C-terminal domain; that stretch reads MLDRILAFVE…GFELSEKDLE (161 aa).

This sequence belongs to the helicase family. RecG subfamily. In terms of assembly, monomer. Interacts with SSB (sbbA), via the latter's 6 C-terminal residues. Colocalizes with DNA pol III subunit gamma/tau (dnaX).

It localises to the cytoplasm. The protein localises to the nucleoid. It carries out the reaction Couples ATP hydrolysis with the unwinding of duplex DNA by translocating in the 3'-5' direction.. The catalysed reaction is ATP + H2O = ADP + phosphate + H(+). Its activity is regulated as follows. Replication fork regression on Holliday junctions (HJ) is inhibited by DisA; DisA inhibits the ATPase activity of RecG. Functionally, critical role in recombination and DNA repair. Helps process Holliday junction intermediates to mature products by catalyzing branch migration. Has a DNA unwinding activity characteristic of a DNA helicase with 3'-5' polarity. Unwinds branched duplex DNA (Y-DNA), Holliday junction (HJ) DNA and partially replicated forks as well as catalyzing fork reversal/regression. Does not seem to unwind R-loops. Inhibits the diadenylate cyclase (DAC) activity of DisA in the presence but not absence of HJ DNA, possibly by relocating DisA from the junction. The chain is ATP-dependent DNA helicase RecG from Bacillus subtilis (strain 168).